We begin with the raw amino-acid sequence, 142 residues long: Small ribosomal subunit protein uS12 (142 aa).

The interval 1-44 (MANGKYAARKLKQDRQQRRWSDSEYARRERGLGAKSDPLEGAPQ) is disordered. A compositionally biased stretch (basic and acidic residues) spans 11-32 (LKQDRQQRRWSDSEYARRERGL).

The protein belongs to the universal ribosomal protein uS12 family. As to quaternary structure, part of the 30S ribosomal subunit.

Functionally, with S4 and S5 plays an important role in translational accuracy. Located at the interface of the 30S and 50S subunits. The protein is Small ribosomal subunit protein uS12 of Haloquadratum walsbyi (strain DSM 16790 / HBSQ001).